The chain runs to 286 residues: ATP synthase gamma chain (286 aa).

The protein belongs to the ATPase gamma chain family. As to quaternary structure, F-type ATPases have 2 components, CF(1) - the catalytic core - and CF(0) - the membrane proton channel. CF(1) has five subunits: alpha(3), beta(3), gamma(1), delta(1), epsilon(1). CF(0) has three main subunits: a, b and c.

The protein resides in the cell membrane. Its function is as follows. Produces ATP from ADP in the presence of a proton gradient across the membrane. The gamma chain is believed to be important in regulating ATPase activity and the flow of protons through the CF(0) complex. This is ATP synthase gamma chain from Oceanobacillus iheyensis (strain DSM 14371 / CIP 107618 / JCM 11309 / KCTC 3954 / HTE831).